A 196-amino-acid chain; its full sequence is N-(5'-phosphoribosyl)anthranilate isomerase (196 aa).

It belongs to the TrpF family.

It catalyses the reaction N-(5-phospho-beta-D-ribosyl)anthranilate = 1-(2-carboxyphenylamino)-1-deoxy-D-ribulose 5-phosphate. Its pathway is amino-acid biosynthesis; L-tryptophan biosynthesis; L-tryptophan from chorismate: step 3/5. The polypeptide is N-(5'-phosphoribosyl)anthranilate isomerase (Nitratiruptor sp. (strain SB155-2)).